We begin with the raw amino-acid sequence, 111 residues long: MLISVLKSKISYATITQKELFYIGSITIDEAIMERAQLTINEQVQIVNLNNGERLETYVIPGKRNSNIIALNGPAARKGEIGDQLFILSYALIDPTQEKLDPVLVDLKLND.

Catalysis depends on Ser25, which acts as the Schiff-base intermediate with substrate; via pyruvic acid. Residue Ser25 is modified to Pyruvic acid (Ser). Residue Thr57 coordinates substrate. Tyr58 (proton donor) is an active-site residue. Position 73–75 (73–75 (GPA)) interacts with substrate.

Belongs to the PanD family. As to quaternary structure, heterooctamer of four alpha and four beta subunits. Pyruvate is required as a cofactor. Post-translationally, is synthesized initially as an inactive proenzyme, which is activated by self-cleavage at a specific serine bond to produce a beta-subunit with a hydroxyl group at its C-terminus and an alpha-subunit with a pyruvoyl group at its N-terminus.

The protein localises to the cytoplasm. The catalysed reaction is L-aspartate + H(+) = beta-alanine + CO2. It participates in cofactor biosynthesis; (R)-pantothenate biosynthesis; beta-alanine from L-aspartate: step 1/1. Its function is as follows. Catalyzes the pyruvoyl-dependent decarboxylation of aspartate to produce beta-alanine. The chain is Aspartate 1-decarboxylase from Coxiella burnetii (strain RSA 493 / Nine Mile phase I).